We begin with the raw amino-acid sequence, 212 residues long: MAFCTKLGGHWKQGVNVPVSSMLGSLRYMSTKLYIGGLSPGTDEHSLKDAFSSFNGVTEARVMTNKVTGRSRGYGFVNFISEDSANSAISAMNGQELNGFNISVNVAKDWPSLPLSLDESIEEAEKKENKMMSRSVWKDPFVDAFLMKKKNAALNRKIWSRRSTILPEYVDSAVRIYNGKTHVRCKITEGKVGHKFGEFAFTRKVKKHAKAK.

The N-terminal 29 residues, 1-29, are a transit peptide targeting the mitochondrion; the sequence is MAFCTKLGGHWKQGVNVPVSSMLGSLRYM. Residues 31–109 enclose the RRM domain; it reads TKLYIGGLSP…FNISVNVAKD (79 aa).

It belongs to the universal ribosomal protein uS19 family. Component of the mitochondrial ribosome small subunit.

The protein resides in the mitochondrion. Functionally, the RNA-binding domain found in RPS19 may functionally replace the missing mitochondrial RPS13. The polypeptide is Small ribosomal subunit protein uS19m (RPS19) (Arabidopsis thaliana (Mouse-ear cress)).